The sequence spans 82 residues: Delta-conotoxin-like SmVIA (82 aa).

The first 22 residues, 1–22, serve as a signal peptide directing secretion; that stretch reads MKLTCVMIVAVLFLIAWTFVTA. Residues 23 to 49 constitute a propeptide that is removed on maturation; sequence DDSRNGLKNLFPKARHEMKNPEASKLN. 3 cysteine pairs are disulfide-bonded: Cys54/Cys69, Cys61/Cys73, and Cys68/Cys77. Pro65 is subject to 4-hydroxyproline.

The protein belongs to the conotoxin O1 superfamily. In terms of tissue distribution, expressed by the venom duct.

It localises to the secreted. In terms of biological role, delta-conotoxins bind to site 6 of voltage-gated sodium channels (Nav) and inhibit the inactivation process. The chain is Delta-conotoxin-like SmVIA from Conus stercusmuscarum (Fly-specked cone).